The following is a 325-amino-acid chain: Prenytransferase adrG (325 aa).

The next 7 membrane-spanning stretches (helical) occupy residues 47–67, 71–91, 117–137, 163–183, 189–209, 236–256, and 258–278; these read LVGVAFSASISSTKIPIAVLL, MLLSIWSIFLRSAGCVWDDLI, ALLLTVALFACGGTVLIFLPW, PQITLMNIGWAVPMAMHSLGL, MTPTVCMFLFIGSVIIMIDVI, LLSYSLLCASTGFLAMAGVLT, and LGLPFFVLSVGGHFCGFWVLL.

It belongs to the UbiA prenyltransferase family. Mg(2+) is required as a cofactor.

It is found in the membrane. The catalysed reaction is 3,5-dimethylorsellinate + (2E,6E)-farnesyl diphosphate = (3R)-3-farnesyl-6-hydroxy-2,3,5-trimethyl-4-oxocyclohexa-1,5-diene-1-carboxylate + diphosphate + H(+). It functions in the pathway secondary metabolite biosynthesis; terpenoid biosynthesis. Prenytransferase; part of the gene cluster that mediates the biosynthesis of andrastins, meroterpenoid compounds that exhibit inhibitory activity against ras farnesyltransferase, suggesting that they could be promising leads for antitumor agents. The first step of the pathway is the synthesis of 3,5-dimethylorsellinic acid (DMOA) by the polyketide synthase adrD via condensation of one acetyl-CoA starter unit with 3 malonyl-CoA units and 2 methylations. DMAO is then converted to farnesyl-DMAO by the prenyltransferase adrG. The methyltransferase adrK catalyzes the methylation of the carboxyl group of farnesyl-DMAO to farnesyl-DMAO methyl ester which is further converted to epoxyfarnesyl-DMAO methyl ester by the FAD-dependent monooxygenase adrH. The terpene cyclase adrI then catalyzes the carbon skeletal rearrangement to generate the andrastin E, the first compound in the pathway having the andrastin scaffold, with the tetracyclic ring system. The post-cyclization tailoring enzymes adrF, adrE, adrJ, and adrA, are involved in the conversion of andrastin E into andrastin A. The short chain dehydrogenase adrF is responsible for the oxidation of the C-3 a hydroxyl group of andrastin E to yield the corresponding ketone, andrastin D. The ketoreductase adrE stereoselectively reduces the carbonyl moiety to reverse the stereochemistry of the C-3 position to yield andrastin F. The acetyltransferase adrJ is the acetyltransferase that attaches the acetyl group to the C-3 hydroxyl group of andrastin F to yield andrastin C. Finally, the cytochrome P450 monooxygenase adrA catalyzes two sequential oxidation reactions of the C-23 methyl group, to generate the corresponding alcohol andrastin B, and aldehyde andrastin A. This is Prenytransferase adrG from Penicillium rubens (strain ATCC 28089 / DSM 1075 / NRRL 1951 / Wisconsin 54-1255) (Penicillium chrysogenum).